Reading from the N-terminus, the 150-residue chain is 6,7-dimethyl-8-ribityllumazine synthase (150 aa).

5-amino-6-(D-ribitylamino)uracil contacts are provided by residues F11, 43-45, and 67-69; these read VFD and AVI. 72-73 provides a ligand contact to (2S)-2-hydroxy-3-oxobutyl phosphate; that stretch reads AT. Catalysis depends on H75, which acts as the Proton donor. L100 is a 5-amino-6-(D-ribitylamino)uracil binding site. Position 115 (R115) interacts with (2S)-2-hydroxy-3-oxobutyl phosphate.

It belongs to the DMRL synthase family.

It carries out the reaction (2S)-2-hydroxy-3-oxobutyl phosphate + 5-amino-6-(D-ribitylamino)uracil = 6,7-dimethyl-8-(1-D-ribityl)lumazine + phosphate + 2 H2O + H(+). It functions in the pathway cofactor biosynthesis; riboflavin biosynthesis; riboflavin from 2-hydroxy-3-oxobutyl phosphate and 5-amino-6-(D-ribitylamino)uracil: step 1/2. Catalyzes the formation of 6,7-dimethyl-8-ribityllumazine by condensation of 5-amino-6-(D-ribitylamino)uracil with 3,4-dihydroxy-2-butanone 4-phosphate. This is the penultimate step in the biosynthesis of riboflavin. The polypeptide is 6,7-dimethyl-8-ribityllumazine synthase (Pyrobaculum calidifontis (strain DSM 21063 / JCM 11548 / VA1)).